A 65-amino-acid chain; its full sequence is Beta-defensin 17 (65 aa).

The first 19 residues, 1–19 (MKFHLLFFILLFSITILTG), serve as a signal peptide directing secretion. 3 disulfide bridges follow: Cys35/Cys63, Cys42/Cys56, and Cys46/Cys64.

Belongs to the beta-defensin family.

It is found in the secreted. Functionally, has antibacterial activity. This Rattus norvegicus (Rat) protein is Beta-defensin 17 (Defb17).